Reading from the N-terminus, the 1199-residue chain is DNA-directed RNA polymerase subunit beta (1199 aa).

The interval 1175 to 1199 (EEKKAHEAAAQATDGKSANSTDDKK) is disordered. Residues 1188-1199 (DGKSANSTDDKK) are compositionally biased toward polar residues.

The protein belongs to the RNA polymerase beta chain family. The RNAP catalytic core consists of 2 alpha, 1 beta, 1 beta' and 1 omega subunit. When a sigma factor is associated with the core the holoenzyme is formed, which can initiate transcription.

The enzyme catalyses RNA(n) + a ribonucleoside 5'-triphosphate = RNA(n+1) + diphosphate. Its function is as follows. DNA-dependent RNA polymerase catalyzes the transcription of DNA into RNA using the four ribonucleoside triphosphates as substrates. This Lacticaseibacillus casei (strain BL23) (Lactobacillus casei) protein is DNA-directed RNA polymerase subunit beta.